The following is an 83-amino-acid chain: Putative beta-neurotoxin RjAa17f (83 aa).

The N-terminal stretch at 1–18 is a signal peptide; that stretch reads MKILIFIIASFMLIGVEC. In terms of domain architecture, LCN-type CS-alpha/beta spans 19-82; that stretch reads KEGYPMGRNG…VWDFSNIKCR (64 aa). 4 disulfides stabilise this stretch: cysteine 29/cysteine 81, cysteine 33/cysteine 55, cysteine 40/cysteine 62, and cysteine 44/cysteine 64.

It belongs to the long (4 C-C) scorpion toxin superfamily. Sodium channel inhibitor family. Beta subfamily. As to expression, expressed by the venom gland.

Its subcellular location is the secreted. Its function is as follows. Beta toxins bind voltage-independently at site-4 of sodium channels (Nav) and shift the voltage of activation toward more negative potentials thereby affecting sodium channel activation and promoting spontaneous and repetitive firing. This Rhopalurus junceus (Caribbean blue scorpion) protein is Putative beta-neurotoxin RjAa17f.